The primary structure comprises 326 residues: Putative HTH-type transcriptional regulatory protein MMP0678 (326 aa).

An HTH cro/C1-type domain is found at 128–183 (LRETREKLKISVGELAEVSRVSRKTIYKYEQNEANPSAEVAIKIEEYLDVPLIKGI). The segment at residues 139–158 (VGELAEVSRVSRKTIYKYEQ) is a DNA-binding region (H-T-H motif).

In Methanococcus maripaludis (strain DSM 14266 / JCM 13030 / NBRC 101832 / S2 / LL), this protein is Putative HTH-type transcriptional regulatory protein MMP0678.